Here is a 60-residue protein sequence, read N- to C-terminus: UPF0434 protein YE1549 (60 aa).

Belongs to the UPF0434 family.

The chain is UPF0434 protein YE1549 from Yersinia enterocolitica serotype O:8 / biotype 1B (strain NCTC 13174 / 8081).